Here is a 169-residue protein sequence, read N- to C-terminus: ATP-dependent Clp protease adapter protein CLPS2, chloroplastic (169 aa).

The N-terminal 33 residues, 1-33 (MLATRCKCNLPSRSFVAPARSVRTRALHVEGRF), are a transit peptide targeting the chloroplast. The interval 67–92 (DAKTDNGNNGSNTDKDKKSPPGGGNY) is disordered.

This sequence belongs to the ClpS family.

The protein localises to the plastid. The protein resides in the chloroplast stroma. Functionally, small adapter protein that modulate the activity of plastid Clp protease system (CLPC). Probably involved in substrate selection for plastid CLPC. In Chlamydomonas reinhardtii (Chlamydomonas smithii), this protein is ATP-dependent Clp protease adapter protein CLPS2, chloroplastic.